The primary structure comprises 103 residues: MYRVTIVYNHPADPAAFDEHYSSKHVPLVQQIPSVKRFAAGKCDSLDGNPPSAYALAQLYFESKAEAGQAFASPEGQNAAADVANFASGGVTMLFTDEETVLP.

Residues 12–88 enclose the EthD domain; that stretch reads ADPAAFDEHY…AAADVANFAS (77 aa).

This is an uncharacterized protein from Rhodococcus erythropolis (Arthrobacter picolinophilus).